The primary structure comprises 496 residues: Putative BTB/POZ domain and WD-repeat protein R61 (496 aa).

The 71-residue stretch at 8 to 78 (SNINLILNDE…MFSDIDIYKN (71 aa)) folds into the BTB domain. 6 WD repeats span residues 149–189 (KFPR…FNSK), 208–248 (IFDN…KEFQ), 250–285 (DYKI…RKVL), 291–330 (KSIG…IIKW), 333–371 (VSKS…KILE), and 422–464 (MYFS…DIIY).

The protein belongs to the mimivirus BTB/WD family.

In Acanthamoeba polyphaga (Amoeba), this protein is Putative BTB/POZ domain and WD-repeat protein R61.